A 211-amino-acid chain; its full sequence is ATP phosphoribosyltransferase (211 aa).

This sequence belongs to the ATP phosphoribosyltransferase family. Short subfamily. Heteromultimer composed of HisG and HisZ subunits.

It localises to the cytoplasm. It carries out the reaction 1-(5-phospho-beta-D-ribosyl)-ATP + diphosphate = 5-phospho-alpha-D-ribose 1-diphosphate + ATP. The protein operates within amino-acid biosynthesis; L-histidine biosynthesis; L-histidine from 5-phospho-alpha-D-ribose 1-diphosphate: step 1/9. In terms of biological role, catalyzes the condensation of ATP and 5-phosphoribose 1-diphosphate to form N'-(5'-phosphoribosyl)-ATP (PR-ATP). Has a crucial role in the pathway because the rate of histidine biosynthesis seems to be controlled primarily by regulation of HisG enzymatic activity. This Bacillus cereus (strain B4264) protein is ATP phosphoribosyltransferase.